Consider the following 99-residue polypeptide: Protein dpy-30 homolog (99 aa).

The residue at position 1 (M1) is an N-acetylmethionine. The segment at 1–26 is disordered; that stretch reads MESEQMLEGQTQVAENPHSEYGLTDS. S19 bears the Phosphoserine mark. At K35 the chain carries N6-acetyllysine; alternate. Residue K35 forms a Glycyl lysine isopeptide (Lys-Gly) (interchain with G-Cter in SUMO2); alternate linkage.

It belongs to the dpy-30 family. In terms of assembly, homodimer. Core component of several methyltransferase-containing complexes including MLL1/MLL, MLL2/3 (also named ASCOM complex) and MLL4/WBP7. Each complex is at least composed of ASH2L, RBBP5, WDR5, DPY30, one or more specific histone methyltransferases (KMT2A/MLL1, KMT2D/MLL2, KMT2C/MLL3 and KMT2B/MLL4), and the facultative components MEN1, HCFC1, HCFC2, NCOA6, KDM6A, PAXIP1/PTIP, PAGR1 and alpha- and beta-tubulin PAXIP1/PTIP, PAGR1 and alpha- and beta-tubulin. Interacts with ASH2L. The interaction with ASH2L is direct. Interacts with ARFGEF1. Component of the SET1 complex, at least composed of the catalytic subunit (SETD1A or SETD1B), WDR5, WDR82, RBBP5, ASH2L/ASH2, CXXC1/CFP1, HCFC1 and DPY30.

It localises to the nucleus. It is found in the golgi apparatus. The protein localises to the trans-Golgi network. Functionally, as part of the MLL1/MLL complex, involved in the methylation of histone H3 at 'Lys-4', particularly trimethylation. Histone H3 'Lys-4' methylation represents a specific tag for epigenetic transcriptional activation. May play some role in histone H3 acetylation. In embryonic stem (ES) cells, plays a crucial role in the differentiation potential, particularly along the neural lineage, regulating gene induction and histone H3 'Lys-4' methylation at key developmental loci, including that mediated by retinoic acid. Does not affect ES cell self-renewal. May also play an indirect or direct role in endosomal transport. The chain is Protein dpy-30 homolog (Dpy30) from Mus musculus (Mouse).